Consider the following 260-residue polypeptide: Lysozyme D (260 aa).

A signal peptide spans 1 to 19 (MRLLVTLILLIFVLTVSGQ). The interval 83–148 (GSTTTGGTGS…SGGSSGSGSG (66 aa)) is disordered. 2 stretches are compositionally biased toward gly residues: residues 101–119 (SGSG…GSGT) and 129–147 (SGSG…GSGS).

Belongs to the dictyostelium lysozyme family. Post-translationally, contains disulfide bonds.

Its subcellular location is the cytoplasmic vesicle lumen. It catalyses the reaction Hydrolysis of (1-&gt;4)-beta-linkages between N-acetylmuramic acid and N-acetyl-D-glucosamine residues in a peptidoglycan and between N-acetyl-D-glucosamine residues in chitodextrins.. Has antibacterial activity. In Dictyostelium discoideum (Social amoeba), this protein is Lysozyme D (alyD-1).